Here is a 533-residue protein sequence, read N- to C-terminus: Cytochrome P450 monooxygenase ltmK (533 aa).

The chain crosses the membrane as a helical span at residues 27-47 (VHWLQVIVALLVLIVCIFLYW). Asparagine 116 carries N-linked (GlcNAc...) asparagine glycosylation. Cysteine 473 contacts heme. Asparagine 528 carries an N-linked (GlcNAc...) asparagine glycan.

Belongs to the cytochrome P450 family. Heme serves as cofactor.

Its subcellular location is the membrane. Its pathway is secondary metabolite biosynthesis. In terms of biological role, cytochrome P450 monooxygenase; part of the gene clusters that mediates the biosynthesis of lolitrems, indole-diterpene mycotoxins that are potent tremorgens in mammals, and are synthesized by clavicipitaceous fungal endophytes in association with their grass hosts. The geranylgeranyl diphosphate (GGPP) synthase ltmG is proposed to catalyze the first step in lolitrem biosynthesis. LtmG catalyzes a series of iterative condensations of isopentenyl diphosphate (IPP) with dimethylallyl diphosphate (DMAPP), geranyl diphosphate (GPP), and farnesyl diphosphate (FPP), to form GGPP. GGPP then condenses with indole-3-glycerol phosphate to form 3-geranylgeranylindole, an acyclic intermediate, to be incorporated into paxilline. Either ltmG or ltmC could be responsible for this step, as both are putative prenyl transferases. The FAD-dependent monooxygenase ltmM then catalyzes the epoxidation of the two terminal alkenes of the geranylgeranyl moiety, which is subsequently cyclized by ltmB, to paspaline. The cytochrome P450 monooxygenases ltmQ and ltmP can sequentially oxidize paspaline to terpendole E and terpendole F. Alternatively, ltmP converts paspaline to an intermediate which is oxidized by ltmQ to terpendole F. LtmF, ltmK, ltmE and ltmJ appear to be unique to the epichloe endophytes. The prenyltransferase ltmF is involved in the 27-hydroxyl-O-prenylation. The cytochrome P450 monooxygenase ltmK is required for the oxidative acetal ring formation. The multi-functional prenyltransferase ltmE is required for C20- and C21-prenylations of the indole ring of paspalanes and acts together with the cytochrome P450 monooxygenase ltmJ to yield lolitremanes by multiple oxidations and ring closures. The stereoisomer pairs of lolitriol and lolitrem N or lolitrem B and lolitrem F may be attributed to variations in the way in which ring closure can occur under the action of ltmJ. While the major product of this pathway is lolitrem B, the prenyl transferases and cytochrome P450 monooxygenases identified in this pathway have a remarkable versatility in their regio- and stereo-specificities to generate a diverse range of metabolites that are products of a metabolic grid rather than a linear pathway. This chain is Cytochrome P450 monooxygenase ltmK, found in Epichloe festucae var. lolii (Neotyphodium lolii).